The primary structure comprises 1299 residues: Outer capsid protein VP1 (1299 aa).

Belongs to the aquareoviridae outer capsid VP1 protein family.

It localises to the virion. The enzyme catalyses a 5'-end diphospho-ribonucleoside in mRNA + GTP + H(+) = a 5'-end (5'-triphosphoguanosine)-ribonucleoside in mRNA + diphosphate. The catalysed reaction is a 5'-end (5'-triphosphoguanosine)-ribonucleoside in mRNA + S-adenosyl-L-methionine = a 5'-end (N(7)-methyl 5'-triphosphoguanosine)-ribonucleoside in mRNA + S-adenosyl-L-homocysteine. In terms of biological role, outer capsid protein involved in mRNA capping. Catalyzes the last 3 enzymatic activities for formation of the 5' cap structure on the viral plus-strand transcripts, namely the RNA guanylyltransferase, RNA-7N- and RNA-2'O-methyltransferase activities. This Aquareovirus C (isolate Golden shiner/USA/GSRV/1977) (AQRV-C) protein is Outer capsid protein VP1 (S1).